A 101-amino-acid chain; its full sequence is Small ribosomal subunit protein uS14 (101 aa).

It belongs to the universal ribosomal protein uS14 family. Part of the 30S ribosomal subunit. Contacts proteins S3 and S10.

Functionally, binds 16S rRNA, required for the assembly of 30S particles and may also be responsible for determining the conformation of the 16S rRNA at the A site. This is Small ribosomal subunit protein uS14 from Pseudomonas syringae pv. tomato (strain ATCC BAA-871 / DC3000).